Here is a 557-residue protein sequence, read N- to C-terminus: Kelch repeat and BTB domain-containing protein 2 (557 aa).

A BTB domain is found at 26 to 95 (CDVIITIRDG…LYNRHISSMN (70 aa)). Residues 143 to 223 (IVKYIKRMLM…CIDIQNLDKK (81 aa)) form the BACK domain. Kelch repeat units lie at residues 305–352 (EIII…VIDD), 353–399 (TIYA…VLDQ), and 415–464 (SVHA…SHED).

As to quaternary structure, interacts (via BTB domain) with host CUL3.

The protein localises to the host cytoplasm. Probable substrate-specific adapter of CUL3-containing E3 ubiquitin-protein ligases which mediate the ubiquitination and subsequent proteasomal degradation of host target proteins. This Cowpox virus (strain Brighton Red) (CPV) protein is Kelch repeat and BTB domain-containing protein 2 (KBTB2).